Here is a 469-residue protein sequence, read N- to C-terminus: Argininosuccinate lyase (469 aa).

Belongs to the lyase 1 family. Argininosuccinate lyase subfamily.

It is found in the cytoplasm. It catalyses the reaction 2-(N(omega)-L-arginino)succinate = fumarate + L-arginine. The protein operates within amino-acid biosynthesis; L-arginine biosynthesis; L-arginine from L-ornithine and carbamoyl phosphate: step 3/3. The protein is Argininosuccinate lyase of Burkholderia thailandensis (strain ATCC 700388 / DSM 13276 / CCUG 48851 / CIP 106301 / E264).